The sequence spans 282 residues: Probable protein phosphatase 2C 10 (282 aa).

Residues 34 to 281 (KFGYSLVKGK…DDISCIVVRL (248 aa)) form the PPM-type phosphatase domain. Residues Asp71, Gly72, Asp233, and Asp272 each coordinate Mn(2+).

It belongs to the PP2C family. It depends on Mg(2+) as a cofactor. Requires Mn(2+) as cofactor.

The enzyme catalyses O-phospho-L-seryl-[protein] + H2O = L-seryl-[protein] + phosphate. It carries out the reaction O-phospho-L-threonyl-[protein] + H2O = L-threonyl-[protein] + phosphate. In Arabidopsis thaliana (Mouse-ear cress), this protein is Probable protein phosphatase 2C 10.